Consider the following 335-residue polypeptide: Zinc-type alcohol dehydrogenase-like protein SAS2087 (335 aa).

Belongs to the zinc-containing alcohol dehydrogenase family. Quinone oxidoreductase subfamily.

The chain is Zinc-type alcohol dehydrogenase-like protein SAS2087 from Staphylococcus aureus (strain MSSA476).